A 62-amino-acid polypeptide reads, in one-letter code: Photosystem II reaction center protein Z (62 aa).

The next 2 helical transmembrane spans lie at 8–28 (FLIA…VAYA) and 41–61 (YVGS…NFLV).

This sequence belongs to the PsbZ family. As to quaternary structure, PSII is composed of 1 copy each of membrane proteins PsbA, PsbB, PsbC, PsbD, PsbE, PsbF, PsbH, PsbI, PsbJ, PsbK, PsbL, PsbM, PsbT, PsbX, PsbY, PsbZ, Psb30/Ycf12, peripheral proteins PsbO, CyanoQ (PsbQ), PsbU, PsbV and a large number of cofactors. It forms dimeric complexes.

The protein localises to the cellular thylakoid membrane. May control the interaction of photosystem II (PSII) cores with the light-harvesting antenna, regulates electron flow through the 2 photosystem reaction centers. PSII is a light-driven water plastoquinone oxidoreductase, using light energy to abstract electrons from H(2)O, generating a proton gradient subsequently used for ATP formation. This chain is Photosystem II reaction center protein Z, found in Microcystis aeruginosa (strain NIES-843 / IAM M-2473).